Consider the following 678-residue polypeptide: MAVKVQTTKRGDPHELRNIFLQYASTEVDGERYMTPEDFVQRYLGLYNDPNSNPKIVQLLAGVADQTKDGLISYQEFLAFESVLCAPDSMFIVAFQLFDKSGNGEVTFENVKEIFGQTIIHHHIPFNWDCEFIRLHFGHNRKKHLNYTEFTQFLQELQLEHARQAFALKDKSKSGMISGLDFSDIMVTIRSHMLTPFVEENLVSAAGGSISHQVSFSYFNAFNSLLNNMELVRKIYSTLAGTRKDVEVTKEEFAQSAIRYGQVTPLEIDILYQLADLYNASGRLTLADIERIAPLAEGALPYNLAELQRQQSPGLGRPIWLQIAESAYRFTLGSVAGAVGATAVYPIDLVKTRMQNQRGSGSVVGELMYKNSFDCFKKVLRYEGFFGLYRGLIPQLIGVAPEKAIKLTVNDFVRDKFTRRDGSVPLPAEVLAGGCAGGSQVIFTNPLEIVKIRLQVAGEITTGPRVSALNVLRDLGIFGLYKGAKACFLRDIPFSAIYFPVYAHCKLLLADENGHVGGLNLLAAGAMAGVPAASLVTPADVIKTRLQVAARAGQTTYSGVIDCFRKILREEGPSAFWKGTAARVFRSSPQFGVTLVTYELLQRWFYIDFGGLKPAGSEPTPKSRIADLPPANPDHIGGYRLATATFAGIENKFGLYLPKFKSPSVAVVQPKAAVAATQ.

Ala2 carries the N-acetylalanine modification. Residues 2–294 (AVKVQTTKRG…TLADIERIAP (293 aa)) form a regulatory N-terminal domain region. Residues 2–329 (AVKVQTTKRG…WLQIAESAYR (328 aa)) lie on the Mitochondrial intermembrane side of the membrane. Ca(2+) contacts are provided by Asp65, Thr67, Asp69, Leu71, and Glu76. 4 EF-hand domains span residues 65-76 (DQTKDGLISYQE), 86-121 (APDSMFIVAFQLFDKSGNGEVTFENVKEIFGQTIIH), 125-155 (PFNWDCEFIRLHFGHNRKKHLNYTEFTQFLQ), and 157-192 (LQLEHARQAFALKDKSKSGMISGLDFSDIMVTIRSH). The tract at residues 295 to 310 (LAEGALPYNLAELQRQ) is linker loop domain. The interval 320 to 612 (WLQIAESAYR…RWFYIDFGGL (293 aa)) is carrier domain. 3 Solcar repeats span residues 324–416 (AESA…VRDK), 424–508 (VPLP…CKLL), and 516–604 (VGGL…LQRW). A helical transmembrane segment spans residues 330-347 (FTLGSVAGAVGATAVYPI). Topologically, residues 348–390 (DLVKTRMQNQRGSGSVVGELMYKNSFDCFKKVLRYEGFFGLYR) are mitochondrial matrix. Residues 391–410 (GLIPQLIGVAPEKAIKLTVN) form a helical membrane-spanning segment. Residues 411 to 433 (DFVRDKFTRRDGSVPLPAEVLAG) lie on the Mitochondrial intermembrane side of the membrane. Residues 434 to 447 (GCAGGSQVIFTNPL) form a helical membrane-spanning segment. At 448-482 (EIVKIRLQVAGEITTGPRVSALNVLRDLGIFGLYK) the chain is on the mitochondrial matrix side. Residues 483 to 502 (GAKACFLRDIPFSAIYFPVY) traverse the membrane as a helical segment. At 503–521 (AHCKLLLADENGHVGGLNL) the chain is on the mitochondrial intermembrane side. Residues 522–539 (LAAGAMAGVPAASLVTPA) traverse the membrane as a helical segment. The Mitochondrial matrix portion of the chain corresponds to 540-578 (DVIKTRLQVAARAGQTTYSGVIDCFRKILREEGPSAFWK). The chain crosses the membrane as a helical span at residues 579–598 (GTAARVFRSSPQFGVTLVTY). The Mitochondrial intermembrane portion of the chain corresponds to 599-678 (ELLQRWFYID…QPKAAVAATQ (80 aa)). The interval 613–675 (KPAGSEPTPK…AVVQPKAAVA (63 aa)) is C-terminal domain.

It belongs to the mitochondrial carrier (TC 2.A.29) family. In terms of assembly, homodimer (via N-terminus). Expressed predominantly in the heart and skeletal muscle, weakly in brain and kidney.

It localises to the mitochondrion inner membrane. It carries out the reaction L-aspartate(in) + L-glutamate(out) + H(+)(out) = L-aspartate(out) + L-glutamate(in) + H(+)(in). The catalysed reaction is 3-sulfino-L-alanine(out) + L-glutamate(in) + H(+)(in) = 3-sulfino-L-alanine(in) + L-glutamate(out) + H(+)(out). The enzyme catalyses 3-sulfino-L-alanine(out) + L-aspartate(in) = 3-sulfino-L-alanine(in) + L-aspartate(out). Its activity is regulated as follows. Activated by calcium-binding in the mitochondrial intermembrane space. Inhibited by pyridoxal 5'-phosphate, bathophenathroline, mercurials, diethyl pyrocarbonate and N-ethylmaleimide. In terms of biological role, mitochondrial electrogenic aspartate/glutamate antiporter that favors efflux of aspartate and entry of glutamate and proton within the mitochondria as part of the malate-aspartate shuttle. Also mediates the uptake of L-cysteinesulfinate (3-sulfino-L-alanine) by mitochondria in exchange of L-glutamate and proton. Can also exchange L-cysteinesulfinate with aspartate in their anionic form without any proton translocation. Lacks transport activity towards L-glutamine or gamma-aminobutyric acid (GABA). The sequence is that of Electrogenic aspartate/glutamate antiporter SLC25A12, mitochondrial from Homo sapiens (Human).